A 219-amino-acid chain; its full sequence is Histidinol-phosphate aminotransferase (219 aa).

Belongs to the class-II pyridoxal-phosphate-dependent aminotransferase family. Histidinol-phosphate aminotransferase subfamily. As to quaternary structure, homodimer. Requires pyridoxal 5'-phosphate as cofactor.

The catalysed reaction is L-histidinol phosphate + 2-oxoglutarate = 3-(imidazol-4-yl)-2-oxopropyl phosphate + L-glutamate. The protein operates within amino-acid biosynthesis; L-histidine biosynthesis; L-histidine from 5-phospho-alpha-D-ribose 1-diphosphate: step 7/9. This chain is Histidinol-phosphate aminotransferase (hisC), found in Mycolicibacterium smegmatis (Mycobacterium smegmatis).